Consider the following 209-residue polypeptide: Transmembrane 4 L6 family member 19 (209 aa).

Residues 1–16 (MVSSPCTQASSRTCSR) lie on the Cytoplasmic side of the membrane. The chain crosses the membrane as a helical span at residues 17 to 37 (ILGLSLGTAALFAAGANVALL). The Extracellular segment spans residues 38 to 59 (LPNWDVTYLLRGLLGRHAMLGT). A helical transmembrane segment spans residues 60–80 (GLWGGGLMVLTAAILISLMGW). The Cytoplasmic segment spans residues 81–93 (RYGCFSKSGLCRS). A helical membrane pass occupies residues 94 to 114 (VLTALLSGGLALLGALICFVT). Residues 115 to 175 (SGVALKDGPF…PSAAVVWHVS (61 aa)) lie on the Extracellular side of the membrane. Asn133 carries an N-linked (GlcNAc...) asparagine glycan. The helical transmembrane segment at 176–196 (LFSALLCISLLQLLLVVVHVI) threads the bilayer. The segment at 186–196 (LQLLLVVVHVI) is important for homodimerization. Topologically, residues 197–209 (NSLLGLFCSLCEK) are cytoplasmic.

This sequence belongs to the L6 tetraspanin family. As to quaternary structure, may form homodimers and homooligomers. Interacts with integrins ITGAV and ITGB3. Interacts with components of members of the V0 complex of vacuolar(H+)-ATPase (V-ATPase), including ATP6V0B and ATP6V0D2; this interaction inhibits V1-V0 complex assembly. In adipose tissue, expressed by macrophages.

The protein resides in the lysosome membrane. It localises to the cytoplasm. The protein localises to the cytoskeleton. It is found in the cell projection. Its subcellular location is the filopodium. In terms of biological role, negatively regulates vacuolar (H+)-ATPase (V-ATPase) activity by interacting with members of V-ATPase V0 complex and hence inhibiting V1-V0 complex assembly. Required for multinucleation during osteoclast differentiation. This chain is Transmembrane 4 L6 family member 19 (TM4SF19), found in Homo sapiens (Human).